A 415-amino-acid chain; its full sequence is Gamma-glutamyl phosphate reductase (415 aa).

Belongs to the gamma-glutamyl phosphate reductase family.

It is found in the cytoplasm. It carries out the reaction L-glutamate 5-semialdehyde + phosphate + NADP(+) = L-glutamyl 5-phosphate + NADPH + H(+). It functions in the pathway amino-acid biosynthesis; L-proline biosynthesis; L-glutamate 5-semialdehyde from L-glutamate: step 2/2. In terms of biological role, catalyzes the NADPH-dependent reduction of L-glutamate 5-phosphate into L-glutamate 5-semialdehyde and phosphate. The product spontaneously undergoes cyclization to form 1-pyrroline-5-carboxylate. In Bacteroides fragilis (strain YCH46), this protein is Gamma-glutamyl phosphate reductase.